We begin with the raw amino-acid sequence, 457 residues long: L-asparaginase-like protein GL17509 (457 aa).

A signal peptide spans 1 to 20 (MRYLCRAQLLSLLLLPLLKA). 3 disulfides stabilise this stretch: C72-C78, C172-C188, and C327-C354.

Belongs to the Ntn-hydrolase family.

The polypeptide is L-asparaginase-like protein GL17509 (Drosophila persimilis (Fruit fly)).